Reading from the N-terminus, the 342-residue chain is Phosphate acyltransferase (342 aa).

The protein belongs to the PlsX family. As to quaternary structure, homodimer. Probably interacts with PlsY.

Its subcellular location is the cytoplasm. The catalysed reaction is a fatty acyl-[ACP] + phosphate = an acyl phosphate + holo-[ACP]. The protein operates within lipid metabolism; phospholipid metabolism. Functionally, catalyzes the reversible formation of acyl-phosphate (acyl-PO(4)) from acyl-[acyl-carrier-protein] (acyl-ACP). This enzyme utilizes acyl-ACP as fatty acyl donor, but not acyl-CoA. The sequence is that of Phosphate acyltransferase from Shewanella sp. (strain MR-4).